The sequence spans 67 residues: UPF0437 protein y4xE (67 aa).

Belongs to the UPF0437 family.

The protein is UPF0437 protein y4xE of Sinorhizobium fredii (strain NBRC 101917 / NGR234).